A 1162-amino-acid chain; its full sequence is MEDIDQSSLVSSSADSPPRPPPAFKYQFVTEPEDEEDEEDEEEEEDDEDLEELEVLERKPAAGLSAAPVPPAAAPLLDFSSDSVPPAPRGPLPAAPPTAPERQPSWERSPAASAPSLPPAAAVLPSKLPEDDEPPARPPAPAGASPLAEPAAPPSTPAAPKRRGSGSVDETLFALPAASEPVIPSSAEKIMDLKEQPGNTVSSGQEDFPSVLFETAASLPSLSPLSTVSFKEHGYLGNLSAVASTEGTIEETLNEASRELPERATNPFVNRESAEFSVLEYSEMGSSFNGSPKGESAMLVENTKEEVIVRSKDKEDLVCSAALHNPQESPATLTKVVKEDGVMSPEKTMDIFNEMKMSVVAPVREEYADFKPFEQAWEVKDTYEGSRDVLAARANMESKVDKKCFEDSLEQKGHGKDSESRNENASFPRTPELVKDGSRAYITCDSFSSATESTAANIFPVLEDHTSENKTDEKKIEERKAQIITEKTSPKTSNPFLVAIHDSEADYVTTDNLSKVTEAVVATMPEGLTPDLVQEACESELNEATGTKIAYETKVDLVQTSEAIQESIYPTAQLCPSFEEAEATPSPVLPDIVMEAPLNSLLPSTGASVAQPSASPLEVPSPVSYDGIKLEPENPPPYEEAMSVALKTSDSKEEIKEPESFNAAAQEAEAPYISIACDLIKETKLSTEPSPEFSNYSEIAKFEKSVPDHCELVDDSSPESEPVDLFSDDSIPEVPQTQEEAVMLMKESLTEVSETVTQHKHKERLSASPQEVGKPYLESFQPNLHITKDAASNEIPTLTKKETISLQMEEFNTAIYSNDDLLSSKEDKMKESETFSDSSPIEIIDEFPTFVSAKDDSPKEYTDLEVSNKSEIANVQSGANSLPCSELPCDLSFKNTYPKDEAHVSDEFSKSRSSVSKVPLLLPNVSALESQIEMGNIVKPKVLTKEAEEKLPSDTEKEDRSLTAVLSAELNKTSVVDLLYWRDIKKTGVVFGASLFLLLSLTVFSIVSVTAYIALALLSVTISFRIYKGVIQAIQKSDEGHPFRAYLESEVAISEELVQKYSNSALGHVNSTIKELRRLFLVDDLVDSLKFAVLMWVFTYVGALFNGLTLLILALISLFSIPVIYERHQAQIDHYLGLANKSVKDAMAKIQAKIPGLKRKAE.

Residue methionine 1 is modified to N-acetylmethionine. The disordered stretch occupies residues 1-183; sequence MEDIDQSSLV…ALPAASEPVI (183 aa). At 1 to 988 the chain is on the cytoplasmic side; that stretch reads MEDIDQSSLV…LYWRDIKKTG (988 aa). 2 positions are modified to phosphoserine: serine 7 and serine 16. The span at 7–16 shows a compositional bias: low complexity; that stretch reads SSLVSSSADS. A compositionally biased stretch (acidic residues) spans 31–54; it reads EPEDEEDEEDEEEEEDDEDLEELE. The segment covering 85–99 has biased composition (pro residues); the sequence is PPAPRGPLPAAPPTA. At serine 105 the chain carries Phosphoserine. Residues 109-127 show a composition bias toward low complexity; the sequence is SPAASAPSLPPAAAVLPSK. Residues serine 145, serine 165, serine 167, serine 329, and serine 344 each carry the phosphoserine modification. The residue at position 348 (threonine 348) is a Phosphothreonine. Over residues 408-422 the composition is skewed to basic and acidic residues; that stretch reads SLEQKGHGKDSESRN. Residues 408–432 form a disordered region; it reads SLEQKGHGKDSESRNENASFPRTPE. A Phosphoserine modification is found at serine 426. Threonine 430 is subject to Phosphothreonine. 5 positions are modified to phosphoserine: serine 489, serine 690, serine 727, serine 768, and serine 832. Residues 711-730 form a disordered region; that stretch reads ELVDDSSPESEPVDLFSDDS. Over residues 713–730 the composition is skewed to acidic residues; it reads VDDSSPESEPVDLFSDDS. Threonine 834 carries the post-translational modification Phosphothreonine. Residues serine 857 and serine 961 each carry the phosphoserine modification. Residues 975 to 1162 enclose the Reticulon domain; the sequence is VVDLLYWRDI…KIPGLKRKAE (188 aa). A helical membrane pass occupies residues 989–1009; sequence VVFGASLFLLLSLTVFSIVSV. At 1010–1078 the chain is on the lumenal side; that stretch reads TAYIALALLS…VNSTIKELRR (69 aa). Residue lysine 1074 is modified to N6-acetyllysine. Residues 1079-1099 traverse the membrane as a helical segment; the sequence is LFLVDDLVDSLKFAVLMWVFT. Residues 1100–1162 lie on the Cytoplasmic side of the membrane; it reads YVGALFNGLT…KIPGLKRKAE (63 aa).

Binds to RTN4R. Interacts with ATL1. Interacts with TMEM170A. Interacts with RTN4IP1. In terms of assembly, interacts in trans with CNTNAP1. Interacts with REEP5. Interacts with GPR50. Interacts with synaptic plasticity regulator PANTS; the interaction results in enhanced RTN4-mediated inhibition of AMPA receptor clustering. As to quaternary structure, homodimer. Interacts with BAD/Bcl-xl and BCL2. Interact with RTN3. Interacts with NGBR. Interacts with SPTLC1. Interacts with GRAMD4. Interacts with CDH5. Interacts with BACE1 and BACE2. Interacts with REEP5. Interacts with RETREG3. Interacts with BACE1 and BACE2. Interacts with TMEM33. In terms of tissue distribution, expressed in cardiomyocytes (at protein level). Highly expressed in brain but not deteceted in aorta, femoral and carotid arteries. Main isoform expressed in neurons. As to expression, expressed in cardiomyocytes (at protein level). Expressed in splenocytes, T-cells, B-cells, bone marrow derived dendritic cells and macrophages (at protein level). Expressed in neurons. Highly expressed in endothelial cells and vascular smooth muscle cells, including blood vessels and mesenteric arteries. Expressed in bronchial and alveolar epithelial cells as well as vascular endothelial cells of lungs. Expressed in B-cells, bone marrow dendritic cells and macrophages (at protein level). In terms of tissue distribution, expressed in cardiomyocytes. As to expression, expressed at very low levels in neurons.

The protein localises to the endoplasmic reticulum membrane. It is found in the cell membrane. The protein resides in the synapse. It localises to the cell junction. Its function is as follows. Required to induce the formation and stabilization of endoplasmic reticulum (ER) tubules. They regulate membrane morphogenesis in the ER by promoting tubular ER production. They influence nuclear envelope expansion, nuclear pore complex formation and proper localization of inner nuclear membrane proteins. However each isoform have specific functions mainly depending on their tissue expression specificities. Functionally, developmental neurite growth regulatory factor with a role as a negative regulator of axon-axon adhesion and growth, and as a facilitator of neurite branching. Regulates neurite fasciculation, branching and extension in the developing nervous system. Involved in down-regulation of growth, stabilization of wiring and restriction of plasticity in the adult CNS. Regulates the radial migration of cortical neurons via an RTN4R-LINGO1 containing receptor complex. Acts as a negative regulator of central nervous system angiogenesis. Inhibits spreading, migration and sprouting of primary brain microvascular endothelial cells (MVECs). Also induces the retraction of MVECs lamellipodia and filopodia in a ROCK pathway-dependent manner. Mainly function in endothelial cells and vascular smooth muscle cells, is also involved in immune system regulation. Modulator of vascular remodeling, promotes the migration of endothelial cells but inhibits the migration of vascular smooth muscle cells. Regulates endothelial sphingolipid biosynthesis with direct effects on vascular function and blood pressure. Inhibits serine palmitoyltransferase, SPTLC1, the rate-limiting enzyme of the novo sphingolipid biosynthetic pathway, thereby controlling production of endothelial sphingosine-1-phosphate (S1P). Required to promote macrophage homing and functions such as cytokine/chemokine gene expression involved in angiogenesis, arteriogenesis and tissue repair. Mediates ICAM1 induced transendothelial migration of leukocytes such as monocytes and neutrophils and acute inflammation. Necessary for immune responses triggered by nucleic acid sensing TLRs, such as TLR9, is required for proper TLR9 location to endolysosomes. Also involved in immune response to LPS. Plays a role in liver regeneration through the modulation of hepatocytes proliferation. Reduces the anti-apoptotic activity of Bcl-xl and Bcl-2. This is likely consecutive to their change in subcellular location, from the mitochondria to the endoplasmic reticulum, after binding and sequestration. With isoform C, inhibits BACE1 activity and amyloid precursor protein processing. In terms of biological role, regulates cardiomyocyte apoptosis upon hypoxic conditions. With isoform B, inhibits BACE1 activity and amyloid precursor protein processing. The protein is Reticulon-4 of Mus musculus (Mouse).